A 149-amino-acid chain; its full sequence is Protein SprT-like (149 aa).

Residues 5 to 143 (DYVKQVSLED…CGLCRGKLLL (139 aa)) form the SprT-like domain. Histidine 64 is a binding site for Zn(2+). Residue glutamate 65 is part of the active site. Zn(2+) is bound at residue histidine 68.

The protein belongs to the SprT family. The cofactor is Zn(2+).

Its subcellular location is the cytoplasm. The chain is Protein SprT-like from Streptococcus pneumoniae (strain Hungary19A-6).